Here is a 293-residue protein sequence, read N- to C-terminus: ATP synthase gamma chain (293 aa).

It belongs to the ATPase gamma chain family. As to quaternary structure, F-type ATPases have 2 components, CF(1) - the catalytic core - and CF(0) - the membrane proton channel. CF(1) has five subunits: alpha(3), beta(3), gamma(1), delta(1), epsilon(1). CF(0) has three main subunits: a, b and c.

The protein resides in the cell membrane. Produces ATP from ADP in the presence of a proton gradient across the membrane. The gamma chain is believed to be important in regulating ATPase activity and the flow of protons through the CF(0) complex. This is ATP synthase gamma chain from Streptococcus sanguinis.